A 366-amino-acid chain; its full sequence is Growth hormone secretagogue receptor type 1 (366 aa).

Residues 1-40 (MWNATPSEEPGPNLTLPDLGWDAPPENDSLVEELLPLFPT) are Extracellular-facing. N-linked (GlcNAc...) asparagine glycosylation is found at N13 and N27. A helical transmembrane segment spans residues 41–66 (PLLAGVTATCVALFVVGIAGNLLTML). Residues 67–72 (VVSRFR) are Cytoplasmic-facing. The chain crosses the membrane as a helical span at residues 73 to 96 (EMRTTTNLYLSSMAFSDLLIFLCM). Topologically, residues 97 to 117 (PLDLFRLWQYRPWNLGNLLCK) are extracellular. C116 and C198 are joined by a disulfide. A helical membrane pass occupies residues 118 to 139 (LFQFVSESCTYATVLTITALSV). Residues 140–162 (ERYFAICFPLRAKVVVTKGRVKL) are Cytoplasmic-facing. Residues 163 to 183 (VILVIWAVAFCSAGPIFVLVG) form a helical membrane-spanning segment. At 184-211 (VEHDNGTDPRDTNECRATEFAVRSGLLT) the chain is on the extracellular side. A helical membrane pass occupies residues 212-235 (VMVWVSSVFFFLPVFCLTVLYSLI). Residues 236-263 (GRKLWRRKRGEAAVGSSLRDQNHKQTVK) lie on the Cytoplasmic side of the membrane. Residues 264-285 (MLAVVVFAFILCWLPFHVGRYL) form a helical membrane-spanning segment. The Extracellular segment spans residues 286–302 (FSKSLEPGSVEIAQISQ). The helical transmembrane segment at 303–326 (YCNLVSFVLFYLSAAINPILYNIM) threads the bilayer. At 327-366 (SKKYRVAVFKLLGFEPFSQRKLSTLKDESSRAWTESSINT) the chain is on the cytoplasmic side.

The protein belongs to the G-protein coupled receptor 1 family. As to expression, pituitary and hypothalamus.

The protein localises to the cell membrane. Its function is as follows. Receptor for ghrelin, coupled to G-alpha-11 proteins. Stimulates growth hormone secretion. Also binds other growth hormone releasing peptides (GHRP) (e.g. Met-enkephalin and GHRP-6) as well as non-peptide, low molecular weight secretagogues (e.g. L-692,429, MK-0677, adenosine). This chain is Growth hormone secretagogue receptor type 1 (GHSR), found in Sus scrofa (Pig).